We begin with the raw amino-acid sequence, 389 residues long: Sulfate adenylyltransferase (389 aa).

The protein belongs to the sulfate adenylyltransferase family.

The enzyme catalyses sulfate + ATP + H(+) = adenosine 5'-phosphosulfate + diphosphate. It functions in the pathway sulfur metabolism; hydrogen sulfide biosynthesis; sulfite from sulfate: step 1/3. The polypeptide is Sulfate adenylyltransferase (Microcystis aeruginosa (strain NIES-843 / IAM M-2473)).